A 363-amino-acid polypeptide reads, in one-letter code: N-acetylmuramate/N-acetylglucosamine kinase (363 aa).

This sequence belongs to the kinase AmgK family.

The catalysed reaction is N-acetyl-D-muramate + ATP = N-acetyl-alpha-D-muramate 1-phosphate + ADP + H(+). It carries out the reaction N-acetyl-D-glucosamine + ATP = N-acetyl-alpha-D-glucosamine 1-phosphate + ADP + H(+). The protein operates within cell wall biogenesis; peptidoglycan recycling. In terms of biological role, sugar kinase that catalyzes the ATP-dependent phosphorylation of N-acetylmuramate (MurNAc) and N-acetylglucosamine (GlcNAc) at its C1 hydroxyl group, leading to MurNAc alpha-1P and GlcNAc alpha-1P, respectively. Is likely involved in peptidoglycan recycling as part of a cell wall recycling pathway that bypasses de novo biosynthesis of the peptidoglycan precursor UDP-MurNAc. Is able to complement the fosfomycin sensitivity phenotype of a P.putida mutant lacking amgK. The protein is N-acetylmuramate/N-acetylglucosamine kinase of Caulobacter vibrioides (strain ATCC 19089 / CIP 103742 / CB 15) (Caulobacter crescentus).